Reading from the N-terminus, the 382-residue chain is Calcium/calmodulin-dependent protein kinase (382 aa).

The region spanning tyrosine 23–leucine 278 is the Protein kinase domain. Residues leucine 29–valine 37 and lysine 50 each bind ATP. Aspartate 142 acts as the Proton acceptor in catalysis. Positions glutamate 291 to leucine 301 are calmodulin-binding. 2 disordered regions span residues lysine 318–serine 344 and glutamine 359–alanine 382.

It belongs to the protein kinase superfamily. CAMK Ser/Thr protein kinase family. CaMK subfamily.

The catalysed reaction is L-seryl-[protein] + ATP = O-phospho-L-seryl-[protein] + ADP + H(+). It carries out the reaction L-threonyl-[protein] + ATP = O-phospho-L-threonyl-[protein] + ADP + H(+). The chain is Calcium/calmodulin-dependent protein kinase from Metarhizium anisopliae (Entomophthora anisopliae).